The primary structure comprises 186 residues: ADP-ribosylation factor-like protein 8 (186 aa).

An intramembrane region (note=Mediates targeting to membranes) is located at residues 1–19; it reads MLALINRILEWFKSIFWKE. Residues 29-35, 71-75, and 130-133 contribute to the GTP site; these read QFSGKTT, DIGGQ, and NKRD.

Belongs to the small GTPase superfamily. Arf family. Interacts with tubulin. Interacts (in GTP-bound form) with Rilpl. Interacts with unc-104. As to expression, expressed throughout development, from embryo to adult stage, in different tissues such as larval motor neurons, salivary glands, testis and ovaries (at protein level).

The protein localises to the lysosome membrane. The protein resides in the synapse. Its subcellular location is the cell projection. It is found in the axon. It localises to the perikaryon. In terms of biological role, required for normal functioning of the late endocytic pathway including lysosome motility and late endosome-lysosome fusion. Not required for the delivery of lysosomal membrane protein-containing vesicles to late endosomes. In larval motor neurons, mediates the anterograde axonal long-range transport of presynaptic lysosome-related vesicles required for presynaptic biogenesis and synaptic function. Acts downstream of Rab2 during presynaptic precursor vesicle biogenesis. Essential role in chromosome segregation. This is ADP-ribosylation factor-like protein 8 from Drosophila melanogaster (Fruit fly).